The chain runs to 432 residues: Enolase (432 aa).

Glutamine 167 provides a ligand contact to (2R)-2-phosphoglycerate. Residue glutamate 209 is the Proton donor of the active site. Residues aspartate 246, glutamate 290, and aspartate 317 each contribute to the Mg(2+) site. 4 residues coordinate (2R)-2-phosphoglycerate: lysine 342, arginine 371, serine 372, and lysine 393. Catalysis depends on lysine 342, which acts as the Proton acceptor.

Belongs to the enolase family. Component of the RNA degradosome, a multiprotein complex involved in RNA processing and mRNA degradation. Mg(2+) serves as cofactor.

Its subcellular location is the cytoplasm. The protein resides in the secreted. It is found in the cell surface. The catalysed reaction is (2R)-2-phosphoglycerate = phosphoenolpyruvate + H2O. The protein operates within carbohydrate degradation; glycolysis; pyruvate from D-glyceraldehyde 3-phosphate: step 4/5. Catalyzes the reversible conversion of 2-phosphoglycerate (2-PG) into phosphoenolpyruvate (PEP). It is essential for the degradation of carbohydrates via glycolysis. The protein is Enolase of Cronobacter sakazakii (strain ATCC BAA-894) (Enterobacter sakazakii).